We begin with the raw amino-acid sequence, 150 residues long: Calmodulin-like protein 7 (150 aa).

EF-hand domains are found at residues 1-36 (MDPT…LGIY), 37-72 (IPDK…IMDE), 75-110 (EEEE…LGLK), and 113-148 (KTLD…GGFN). Aspartate 14, asparagine 16, aspartate 18, threonine 20, glutamate 25, aspartate 50, asparagine 52, aspartate 54, cysteine 56, glutamate 61, aspartate 88, asparagine 90, aspartate 92, glutamate 99, aspartate 126, aspartate 128, aspartate 130, arginine 132, and glutamate 137 together coordinate Ca(2+).

This sequence belongs to the calmodulin family.

In terms of biological role, potential calcium sensor. The polypeptide is Calmodulin-like protein 7 (CML7) (Arabidopsis thaliana (Mouse-ear cress)).